The primary structure comprises 299 residues: Oxygen-dependent coproporphyrinogen-III oxidase (299 aa).

Ser-92 provides a ligand contact to substrate. Mn(2+) contacts are provided by His-96 and His-106. Residue His-106 is the Proton donor of the active site. Substrate is bound at residue 108-110 (NVR). Residues His-145 and His-175 each coordinate Mn(2+). Residues 240 to 275 (YVEFNLVWDRGTLFGLQTGGRTESILMSMPPLVRWE) are important for dimerization. 258–260 (GGR) contributes to the substrate binding site.

This sequence belongs to the aerobic coproporphyrinogen-III oxidase family. As to quaternary structure, homodimer. It depends on Mn(2+) as a cofactor.

It localises to the cytoplasm. It catalyses the reaction coproporphyrinogen III + O2 + 2 H(+) = protoporphyrinogen IX + 2 CO2 + 2 H2O. Its pathway is porphyrin-containing compound metabolism; protoporphyrin-IX biosynthesis; protoporphyrinogen-IX from coproporphyrinogen-III (O2 route): step 1/1. Its function is as follows. Involved in the heme biosynthesis. Catalyzes the aerobic oxidative decarboxylation of propionate groups of rings A and B of coproporphyrinogen-III to yield the vinyl groups in protoporphyrinogen-IX. The sequence is that of Oxygen-dependent coproporphyrinogen-III oxidase from Escherichia coli O127:H6 (strain E2348/69 / EPEC).